The sequence spans 582 residues: Methionine--tRNA ligase (582 aa).

Positions 24-34 (PYIYAVPHLGN) match the 'HIGH' region motif. Positions 156, 159, 169, and 172 each coordinate Zn(2+). A 'KMSKS' region motif is present at residues 346 to 350 (KFSKS). K349 is an ATP binding site.

This sequence belongs to the class-I aminoacyl-tRNA synthetase family. MetG type 1 subfamily. Requires Zn(2+) as cofactor.

It localises to the cytoplasm. The catalysed reaction is tRNA(Met) + L-methionine + ATP = L-methionyl-tRNA(Met) + AMP + diphosphate. Functionally, is required not only for elongation of protein synthesis but also for the initiation of all mRNA translation through initiator tRNA(fMet) aminoacylation. The polypeptide is Methionine--tRNA ligase (Caldivirga maquilingensis (strain ATCC 700844 / DSM 13496 / JCM 10307 / IC-167)).